Here is a 409-residue protein sequence, read N- to C-terminus: G2/mitotic-specific cyclin-B (409 aa).

Belongs to the cyclin family. Cyclin AB subfamily. As to quaternary structure, interacts with the CDK1 protein kinase to form a serine/threonine kinase holoenzyme complex also known as maturation promoting factor (MPF). The cyclin subunit imparts substrate specificity to the complex.

Functionally, essential for the control of the cell cycle at the G2/M (mitosis) transition. The protein is G2/mitotic-specific cyclin-B of Arbacia punctulata (Punctuate sea urchin).